The sequence spans 194 residues: Peroxiredoxin 2 (194 aa).

The Thioredoxin domain maps to 2–160 (PQLQKPAPAF…TLRLVQAFQY (159 aa)). Cys-47 (cysteine sulfenic acid (-SOH) intermediate) is an active-site residue. At Thr-193 the chain carries Phosphothreonine. Ser-194 carries the phosphoserine modification.

Belongs to the peroxiredoxin family. AhpC/Prx1 subfamily. In terms of assembly, homodimer; disulfide-linked, upon oxidation. 5 homodimers assemble to form a ring-like decamer. Also exists as a monomer. Post-translationally, the enzyme can be inactivated by further oxidation of the cysteine sulfenic acid (C(P)-SOH) to sulphinic acid (C(P)-SO2H) instead of its condensation to a disulfide bond. It can be reactivated by forming a transient disulfide bond with sulfiredoxin SRXN1, which reduces the cysteine sulfinic acid in an ATP- and Mg-dependent manner. Conjugated to URM1, a ubiquitin-like protein. As to expression, detected in the head and body (at protein level).

It localises to the cytoplasm. The enzyme catalyses a hydroperoxide + [thioredoxin]-dithiol = an alcohol + [thioredoxin]-disulfide + H2O. Functionally, thiol-specific peroxidase that catalyzes the reduction of hydrogen peroxide and organic hydroperoxides to water and alcohols, respectively. Plays a role in cell protection against oxidative stress by detoxifying peroxides and as sensor of hydrogen peroxide-mediated signaling events. Might participate in the signaling cascades of growth factors and tumor necrosis factor-alpha by regulating the intracellular concentrations of H(2)O(2). Reduces an intramolecular disulfide bond in GDPD5 that gates the ability to GDPD5 to drive postmitotic motor neuron differentiation. This Drosophila melanogaster (Fruit fly) protein is Peroxiredoxin 2.